We begin with the raw amino-acid sequence, 336 residues long: Ferrochelatase (336 aa).

2 residues coordinate Fe cation: His-206 and Glu-287.

It belongs to the ferrochelatase family.

Its subcellular location is the cytoplasm. The enzyme catalyses heme b + 2 H(+) = protoporphyrin IX + Fe(2+). It functions in the pathway porphyrin-containing compound metabolism; protoheme biosynthesis; protoheme from protoporphyrin-IX: step 1/1. Catalyzes the ferrous insertion into protoporphyrin IX. This chain is Ferrochelatase, found in Neisseria meningitidis serogroup A / serotype 4A (strain DSM 15465 / Z2491).